We begin with the raw amino-acid sequence, 396 residues long: S-arrestin (396 aa).

A compositionally biased stretch (basic and acidic residues) spans Ala375 to Glu386. Residues Ala375–Lys396 form a disordered region. Acidic residues predominate over residues Glu387 to Lys396.

This sequence belongs to the arrestin family. As to quaternary structure, interacts with RHO (via the phosphorylated C-terminus).

It is found in the cell projection. Its subcellular location is the cilium. The protein localises to the photoreceptor outer segment. It localises to the membrane. Its function is as follows. Binds to photoactivated, phosphorylated RHO and terminates RHO signaling via G-proteins by competing with G-proteins for the same binding site on RHO. May play a role in preventing light-dependent degeneration of retinal photoreceptor cells. The polypeptide is S-arrestin (sag) (Xenopus laevis (African clawed frog)).